A 237-amino-acid chain; its full sequence is Pyridoxine 5'-phosphate synthase (237 aa).

The 3-amino-2-oxopropyl phosphate site is built by Asn-7 and Arg-18. His-43 functions as the Proton acceptor in the catalytic mechanism. 2 residues coordinate 1-deoxy-D-xylulose 5-phosphate: Arg-45 and His-50. The active-site Proton acceptor is Glu-70. Thr-100 serves as a coordination point for 1-deoxy-D-xylulose 5-phosphate. The Proton donor role is filled by His-190. Residues Asp-191 and 213–214 (GH) each bind 3-amino-2-oxopropyl phosphate.

Belongs to the PNP synthase family. Homooctamer; tetramer of dimers.

The protein localises to the cytoplasm. It catalyses the reaction 3-amino-2-oxopropyl phosphate + 1-deoxy-D-xylulose 5-phosphate = pyridoxine 5'-phosphate + phosphate + 2 H2O + H(+). It participates in cofactor biosynthesis; pyridoxine 5'-phosphate biosynthesis; pyridoxine 5'-phosphate from D-erythrose 4-phosphate: step 5/5. Its function is as follows. Catalyzes the complicated ring closure reaction between the two acyclic compounds 1-deoxy-D-xylulose-5-phosphate (DXP) and 3-amino-2-oxopropyl phosphate (1-amino-acetone-3-phosphate or AAP) to form pyridoxine 5'-phosphate (PNP) and inorganic phosphate. This chain is Pyridoxine 5'-phosphate synthase, found in Christiangramia forsetii (strain DSM 17595 / CGMCC 1.15422 / KT0803) (Gramella forsetii).